Reading from the N-terminus, the 176-residue chain is 3-hydroxydecanoyl-[acyl-carrier-protein] dehydratase (176 aa).

Residue His71 is part of the active site.

It belongs to the thioester dehydratase family. FabA subfamily. As to quaternary structure, homodimer.

The protein localises to the cytoplasm. It carries out the reaction a (3R)-hydroxyacyl-[ACP] = a (2E)-enoyl-[ACP] + H2O. It catalyses the reaction (3R)-hydroxydecanoyl-[ACP] = (2E)-decenoyl-[ACP] + H2O. The catalysed reaction is (2E)-decenoyl-[ACP] = (3Z)-decenoyl-[ACP]. It functions in the pathway lipid metabolism; fatty acid biosynthesis. Functionally, necessary for the introduction of cis unsaturation into fatty acids. Catalyzes the dehydration of (3R)-3-hydroxydecanoyl-ACP to E-(2)-decenoyl-ACP and then its isomerization to Z-(3)-decenoyl-ACP. Can catalyze the dehydratase reaction for beta-hydroxyacyl-ACPs with saturated chain lengths up to 16:0, being most active on intermediate chain length. This is 3-hydroxydecanoyl-[acyl-carrier-protein] dehydratase from Rhodopseudomonas palustris (strain BisA53).